The chain runs to 257 residues: 7-carboxy-7-deazaguanine synthase (257 aa).

Substrate is bound by residues 29 to 31 (LQG) and Arg-44. The Radical SAM core domain occupies 35 to 253 (LAGTPSVFVR…PRLHVALWND (219 aa)). The [4Fe-4S] cluster site is built by Cys-48, Cys-52, and Cys-55. Ser-57 lines the Mg(2+) pocket. Residue Thr-90 participates in substrate binding. Gly-92 contacts S-adenosyl-L-methionine. Residues 133–153 (VSPKLASSTPTAETDPKGDGE) form a disordered region.

Belongs to the radical SAM superfamily. 7-carboxy-7-deazaguanine synthase family. In terms of assembly, homodimer. [4Fe-4S] cluster is required as a cofactor. S-adenosyl-L-methionine serves as cofactor. Requires Mg(2+) as cofactor.

The enzyme catalyses 6-carboxy-5,6,7,8-tetrahydropterin + H(+) = 7-carboxy-7-deazaguanine + NH4(+). The protein operates within purine metabolism; 7-cyano-7-deazaguanine biosynthesis. Its function is as follows. Catalyzes the complex heterocyclic radical-mediated conversion of 6-carboxy-5,6,7,8-tetrahydropterin (CPH4) to 7-carboxy-7-deazaguanine (CDG), a step common to the biosynthetic pathways of all 7-deazapurine-containing compounds. The protein is 7-carboxy-7-deazaguanine synthase of Halobacterium salinarum (strain ATCC 29341 / DSM 671 / R1).